The following is a 530-amino-acid chain: Putative ABC transporter ATP-binding protein SSO2030 (530 aa).

ABC transporter domains follow at residues 6 to 243 (IRDL…LGLE) and 282 to 516 (ALYA…EPPL). ATP contacts are provided by residues 38–45 (GRSGSGKS) and 314–321 (GKNGSGKT).

It belongs to the ABC transporter superfamily.

The protein resides in the cell membrane. Its function is as follows. Probably part of an ABC transporter complex. Responsible for energy coupling to the transport system. The chain is Putative ABC transporter ATP-binding protein SSO2030 from Saccharolobus solfataricus (strain ATCC 35092 / DSM 1617 / JCM 11322 / P2) (Sulfolobus solfataricus).